A 177-amino-acid chain; its full sequence is Large ribosomal subunit protein uL6 (177 aa).

This sequence belongs to the universal ribosomal protein uL6 family. In terms of assembly, part of the 50S ribosomal subunit.

This protein binds to the 23S rRNA, and is important in its secondary structure. It is located near the subunit interface in the base of the L7/L12 stalk, and near the tRNA binding site of the peptidyltransferase center. In Xanthobacter autotrophicus (strain ATCC BAA-1158 / Py2), this protein is Large ribosomal subunit protein uL6.